The primary structure comprises 397 residues: Ribosomal RNA large subunit methyltransferase I (397 aa).

The PUA domain maps to 2-81; that stretch reads STTVYLQKDR…EQIDTEFFVR (80 aa).

It belongs to the methyltransferase superfamily. RlmI family.

The protein resides in the cytoplasm. It catalyses the reaction cytidine(1962) in 23S rRNA + S-adenosyl-L-methionine = 5-methylcytidine(1962) in 23S rRNA + S-adenosyl-L-homocysteine + H(+). Its function is as follows. Specifically methylates the cytosine at position 1962 (m5C1962) of 23S rRNA. This is Ribosomal RNA large subunit methyltransferase I from Tolumonas auensis (strain DSM 9187 / NBRC 110442 / TA 4).